The chain runs to 235 residues: MRFEQPLEEGRLLRRYKRFLADIESAGGERLTIHCPNTGSMLNCMSEGCRVWFSRSNDPKRKLPGTWELSETPQGRLACVNTARANRLVEEALLAGDIAELAGFTALRREVAYGVENSRADFRLEYPTGALFIEVKSVTLGFDETAVAAFPDAVTLRGAKHLRELAALAREGIRAVQLYCVNLSGVEAVRPADEIDPAYGKALREAAQAGVEVLAYGAEVTTEGLNLARRLPVRL.

This sequence belongs to the SfsA family.

This Pseudomonas aeruginosa (strain ATCC 15692 / DSM 22644 / CIP 104116 / JCM 14847 / LMG 12228 / 1C / PRS 101 / PAO1) protein is Sugar fermentation stimulation protein homolog.